The sequence spans 298 residues: Protoheme IX farnesyltransferase (298 aa).

Transmembrane regions (helical) follow at residues 16-36, 45-65, 97-117, 141-161, 172-192, 223-243, 244-264, and 277-297; these read VVALIVFTALVGMFLAIPGMP, ALGFLGIWLAASAAAAINQLL, VLIVISMTILVVWVNVITAVL, IVIGGLAGATPPMLGWAAVTG, SLLVLIIFIWTPPHFWALAIF, VLLAIVTLLPVAVGMSGVFYL, GGAVVLNAVFLWYAWRMLDPP, and VVYLMALFAFLMVDHLLLPWV.

It belongs to the UbiA prenyltransferase family. Protoheme IX farnesyltransferase subfamily.

The protein resides in the cell inner membrane. It catalyses the reaction heme b + (2E,6E)-farnesyl diphosphate + H2O = Fe(II)-heme o + diphosphate. It functions in the pathway porphyrin-containing compound metabolism; heme O biosynthesis; heme O from protoheme: step 1/1. Functionally, converts heme B (protoheme IX) to heme O by substitution of the vinyl group on carbon 2 of heme B porphyrin ring with a hydroxyethyl farnesyl side group. This chain is Protoheme IX farnesyltransferase, found in Xanthomonas campestris pv. campestris (strain 8004).